The primary structure comprises 177 residues: Adenine phosphoribosyltransferase (177 aa).

The protein belongs to the purine/pyrimidine phosphoribosyltransferase family. In terms of assembly, homodimer.

The protein resides in the cytoplasm. The enzyme catalyses AMP + diphosphate = 5-phospho-alpha-D-ribose 1-diphosphate + adenine. The protein operates within purine metabolism; AMP biosynthesis via salvage pathway; AMP from adenine: step 1/1. Functionally, catalyzes a salvage reaction resulting in the formation of AMP, that is energically less costly than de novo synthesis. In Chlorobium luteolum (strain DSM 273 / BCRC 81028 / 2530) (Pelodictyon luteolum), this protein is Adenine phosphoribosyltransferase.